The sequence spans 413 residues: uncharacterized protein (413 aa).

It belongs to the mimivirus L17x/L18x family.

This is an uncharacterized protein from Acanthamoeba polyphaga (Amoeba).